The chain runs to 892 residues: Alanine--tRNA ligase (892 aa).

4 residues coordinate Zn(2+): H565, H569, C678, and H682. The segment at 857 to 876 (GGKGGGGRPDMAQAGGPDGA) is disordered.

Belongs to the class-II aminoacyl-tRNA synthetase family. Zn(2+) is required as a cofactor.

The protein resides in the cytoplasm. It carries out the reaction tRNA(Ala) + L-alanine + ATP = L-alanyl-tRNA(Ala) + AMP + diphosphate. Catalyzes the attachment of alanine to tRNA(Ala) in a two-step reaction: alanine is first activated by ATP to form Ala-AMP and then transferred to the acceptor end of tRNA(Ala). Also edits incorrectly charged Ser-tRNA(Ala) and Gly-tRNA(Ala) via its editing domain. The polypeptide is Alanine--tRNA ligase (Bradyrhizobium diazoefficiens (strain JCM 10833 / BCRC 13528 / IAM 13628 / NBRC 14792 / USDA 110)).